A 369-amino-acid polypeptide reads, in one-letter code: Tetraacyldisaccharide 4'-kinase (369 aa).

68-75 is an ATP binding site; it reads VVGGTGKT.

Belongs to the LpxK family.

The enzyme catalyses a lipid A disaccharide + ATP = a lipid IVA + ADP + H(+). It participates in glycolipid biosynthesis; lipid IV(A) biosynthesis; lipid IV(A) from (3R)-3-hydroxytetradecanoyl-[acyl-carrier-protein] and UDP-N-acetyl-alpha-D-glucosamine: step 6/6. Functionally, transfers the gamma-phosphate of ATP to the 4'-position of a tetraacyldisaccharide 1-phosphate intermediate (termed DS-1-P) to form tetraacyldisaccharide 1,4'-bis-phosphate (lipid IVA). This Chlamydia muridarum (strain MoPn / Nigg) protein is Tetraacyldisaccharide 4'-kinase.